Reading from the N-terminus, the 545-residue chain is CTP synthase (545 aa).

The amidoligase domain stretch occupies residues 1–266 (MTTNYIFVTG…DDYICKRFGL (266 aa)). Residue Ser-14 participates in CTP binding. Ser-14 lines the UTP pocket. Residues 15–20 (SLGKGI) and Asp-72 contribute to the ATP site. Residues Asp-72 and Glu-140 each contribute to the Mg(2+) site. CTP-binding positions include 147 to 149 (DIE), 187 to 192 (KTKPTQ), and Lys-223. Residues 187 to 192 (KTKPTQ) and Lys-223 each bind UTP. 239–241 (KDV) lines the ATP pocket. In terms of domain architecture, Glutamine amidotransferase type-1 spans 291-542 (TIGMVGKYIA…VKAAGEYQKR (252 aa)). Gly-352 contacts L-glutamine. Cys-379 acts as the Nucleophile; for glutamine hydrolysis in catalysis. Residues 380–383 (LGMQ), Glu-403, and Arg-470 contribute to the L-glutamine site. Active-site residues include His-515 and Glu-517.

The protein belongs to the CTP synthase family. Homotetramer.

The enzyme catalyses UTP + L-glutamine + ATP + H2O = CTP + L-glutamate + ADP + phosphate + 2 H(+). It carries out the reaction L-glutamine + H2O = L-glutamate + NH4(+). The catalysed reaction is UTP + NH4(+) + ATP = CTP + ADP + phosphate + 2 H(+). Its pathway is pyrimidine metabolism; CTP biosynthesis via de novo pathway; CTP from UDP: step 2/2. With respect to regulation, allosterically activated by GTP, when glutamine is the substrate; GTP has no effect on the reaction when ammonia is the substrate. The allosteric effector GTP functions by stabilizing the protein conformation that binds the tetrahedral intermediate(s) formed during glutamine hydrolysis. Inhibited by the product CTP, via allosteric rather than competitive inhibition. Catalyzes the ATP-dependent amination of UTP to CTP with either L-glutamine or ammonia as the source of nitrogen. Regulates intracellular CTP levels through interactions with the four ribonucleotide triphosphates. The sequence is that of CTP synthase from Sodalis glossinidius (strain morsitans).